Here is an 876-residue protein sequence, read N- to C-terminus: GRB2-associated and regulator of MAPK protein 1 (876 aa).

Residues 12–320 are CABIT; that stretch reads KDVKWSSVAV…HLVKGESWPE (309 aa). A phosphotyrosine mark is found at Tyr105 and Tyr453. Residues 496–572 form a disordered region; it reads IPGTLGAAVK…SPSPTLSYYS (77 aa). Positions 498–550 are necessary for interaction with GRB2; the sequence is GTLGAAVKSSDTALPPPPVPPKSEAVREECRLLNAPPVPPRSAKPLSTSPSIP. A compositionally biased stretch (polar residues) spans 558 to 572; sequence RQQTRSPSPTLSYYS. Phosphoserine occurs at positions 610 and 614. Disordered regions lie at residues 626–664 and 738–763; these read WPNHYSGASESQTRSDFLLDPSRSYSYPRQKTPGTPKRN and ASETSPLPLKIDGAEEDPKSGSPDLS. 2 stretches are compositionally biased toward polar residues: residues 631–640 and 648–658; these read SGASESQTRS and RSYSYPRQKTP. One can recognise an SAM domain in the interval 811-876; that stretch reads LSIEEVSKSL…QFINGWRPKI (66 aa).

Belongs to the GAREM family. As to quaternary structure, isoform 1 interacts with EGFR. Isoform 1 interacts (via proline-rich domain and phosphorylated at Tyr-105 and Tyr-453) with GRB2 (via SH3 domains); the interaction occurs upon EGF stimulation. Isoform 1 interacts (phosphorylated at Tyr-453) with PTPN11; the interaction increases MAPK/ERK activity and does not affect the GRB2/SOS complex formation. Isoform 2 does not interact with GRB2. Post-translationally, on EGF stimulation, phosphorylated on Tyr-105 and Tyr-453. In terms of tissue distribution, isoform 1 is ubiquitously expressed.

Acts as an adapter protein that plays a role in intracellular signaling cascades triggered either by the cell surface activated epidermal growth factor receptor and/or cytoplasmic protein tyrosine kinases. Promotes activation of the MAPK/ERK signaling pathway. Plays a role in the regulation of cell proliferation. This chain is GRB2-associated and regulator of MAPK protein 1 (GAREM1), found in Homo sapiens (Human).